The following is a 331-amino-acid chain: Aspartate carbamoyltransferase catalytic subunit (331 aa).

Residues Arg62 and Thr63 each coordinate carbamoyl phosphate. Residue Lys90 coordinates L-aspartate. Residues Arg112, His145, and Gln148 each coordinate carbamoyl phosphate. 2 residues coordinate L-aspartate: Arg185 and Arg246. Gly287 and Pro288 together coordinate carbamoyl phosphate.

It belongs to the aspartate/ornithine carbamoyltransferase superfamily. ATCase family. In terms of assembly, heterododecamer (2C3:3R2) of six catalytic PyrB chains organized as two trimers (C3), and six regulatory PyrI chains organized as three dimers (R2).

It catalyses the reaction carbamoyl phosphate + L-aspartate = N-carbamoyl-L-aspartate + phosphate + H(+). The protein operates within pyrimidine metabolism; UMP biosynthesis via de novo pathway; (S)-dihydroorotate from bicarbonate: step 2/3. Its function is as follows. Catalyzes the condensation of carbamoyl phosphate and aspartate to form carbamoyl aspartate and inorganic phosphate, the committed step in the de novo pyrimidine nucleotide biosynthesis pathway. This Synechocystis sp. (strain ATCC 27184 / PCC 6803 / Kazusa) protein is Aspartate carbamoyltransferase catalytic subunit.